Here is a 447-residue protein sequence, read N- to C-terminus: Monocarboxylate transporter 11 (447 aa).

Residues M1–G11 are Cytoplasmic-facing. A run of 12 helical transmembrane segments spans residues G12–L32, A54–L74, A80–F100, L107–L127, V139–A159, F162–H182, A219–V239, G249–A269, L288–V308, G330–V350, G354–L374, and A383–P403. Topologically, residues R404–C447 are cytoplasmic.

This sequence belongs to the major facilitator superfamily. Monocarboxylate porter (TC 2.A.1.13) family. As to quaternary structure, interacts with isoform 2 of BSG.

Its subcellular location is the endoplasmic reticulum membrane. The protein localises to the cell membrane. It carries out the reaction pyruvate(out) + H(+)(out) = pyruvate(in) + H(+)(in). Proton-linked monocarboxylate transporter. It catalyzes the transport of pyruvate across the plasma membrane. Probably involved in hepatic lipid metabolism: overexpression results in an increase of triacylglycerol(TAG) levels, small increases in intracellular diacylglycerols and decreases in lysophosphatidylcholine, cholesterol ester and sphingomyelin lipids. The sequence is that of Monocarboxylate transporter 11 (Slc16a11) from Mus musculus (Mouse).